Here is a 165-residue protein sequence, read N- to C-terminus: Endoribonuclease YbeY (165 aa).

The Zn(2+) site is built by histidine 130, histidine 134, and histidine 140.

This sequence belongs to the endoribonuclease YbeY family. The cofactor is Zn(2+).

The protein localises to the cytoplasm. Functionally, single strand-specific metallo-endoribonuclease involved in late-stage 70S ribosome quality control and in maturation of the 3' terminus of the 16S rRNA. In Streptococcus pneumoniae serotype 4 (strain ATCC BAA-334 / TIGR4), this protein is Endoribonuclease YbeY.